Reading from the N-terminus, the 180-residue chain is Ribosome maturation factor RimM (180 aa).

In terms of domain architecture, PRC barrel spans 97-169 (PGELSWDFFV…IITVDLPEGL (73 aa)).

Belongs to the RimM family. In terms of assembly, binds ribosomal protein uS19.

It is found in the cytoplasm. An accessory protein needed during the final step in the assembly of 30S ribosomal subunit, possibly for assembly of the head region. Essential for efficient processing of 16S rRNA. May be needed both before and after RbfA during the maturation of 16S rRNA. It has affinity for free ribosomal 30S subunits but not for 70S ribosomes. This Bacteroides fragilis (strain YCH46) protein is Ribosome maturation factor RimM.